The sequence spans 75 residues: Small ribosomal subunit protein bS18c (75 aa).

The protein belongs to the bacterial ribosomal protein bS18 family. Part of the 30S ribosomal subunit.

It is found in the plastid. The chain is Small ribosomal subunit protein bS18c from Aneura mirabilis (Parasitic liverwort).